The sequence spans 478 residues: Protein ZINC INDUCED FACILITATOR-LIKE 1 (478 aa).

12 consecutive transmembrane segments (helical) span residues I43 to I63, F81 to A101, P108 to L128, F130 to I150, A169 to A189, F208 to S228, I280 to W300, V317 to S337, I346 to A367, V378 to I398, I415 to F435, and V453 to L473.

It belongs to the major facilitator superfamily. As to expression, predominantly expressed in roots and stomatal guard cells. Detected in anther stamen filaments and shoot apical meristem. In the mature portion of roots, restricted to the cortex. At the root tip, highly expressed in both the cortical and epidermal cell layers of the apical meristem and the transition zone, while absent from the quiescent center or the columella cells. Not detected in lateral root primordia.

The protein localises to the cell membrane. The protein resides in the vacuole membrane. In terms of biological role, major facilitator superfamily (MFS) transporter probably involved in 2,4-dichlorophenoxyacetic acid (2,4-D) export. K(+) may be the physiological substrate of the transporter. Modulates root auxin-related processes. Involved in auxin efflux and acts as a positive regulator of shootward transport at the root apex. May mediate proton efflux from the vacuolar compartment. Its function is as follows. Mediates drought stress tolerance by regulating stomatal closure. The chain is Protein ZINC INDUCED FACILITATOR-LIKE 1 (ZIFL1) from Arabidopsis thaliana (Mouse-ear cress).